The primary structure comprises 147 residues: uncharacterized protein (147 aa).

This is an uncharacterized protein from Acidianus convivator (ATV).